Consider the following 404-residue polypeptide: Argininosuccinate synthase (404 aa).

ATP is bound by residues 10–18 and Ala-37; that span reads AYSGGLDTS. Tyr-89 and Ser-94 together coordinate L-citrulline. Gly-119 is an ATP binding site. L-aspartate-binding residues include Thr-121, Asn-125, and Asp-126. L-citrulline is bound at residue Asn-125. L-citrulline is bound by residues Arg-129, Ser-178, Ser-187, Glu-263, and Tyr-275.

It belongs to the argininosuccinate synthase family. Type 1 subfamily. Homotetramer.

The protein localises to the cytoplasm. It carries out the reaction L-citrulline + L-aspartate + ATP = 2-(N(omega)-L-arginino)succinate + AMP + diphosphate + H(+). The protein operates within amino-acid biosynthesis; L-arginine biosynthesis; L-arginine from L-ornithine and carbamoyl phosphate: step 2/3. The protein is Argininosuccinate synthase of Photobacterium profundum (strain SS9).